The following is a 251-amino-acid chain: Alanyl-tRNA editing protein AlaX-M (251 aa).

Positions 107, 111, 210, and 214 each coordinate Zn(2+).

Belongs to the class-II aminoacyl-tRNA synthetase family. Editing domain AlaX-M subfamily. Requires Zn(2+) as cofactor.

Its subcellular location is the cytoplasm. Its function is as follows. Functions in trans to edit the amino acid moiety from mischarged Ser-tRNA(Ala). Recognition depends, at least in part, on the acceptor stem of tRNA(Ala). The chain is Alanyl-tRNA editing protein AlaX-M (alaXM) from Methanosarcina mazei (strain ATCC BAA-159 / DSM 3647 / Goe1 / Go1 / JCM 11833 / OCM 88) (Methanosarcina frisia).